A 609-amino-acid chain; its full sequence is Manganese lipoxygenase (609 aa).

A signal peptide spans 1 to 16 (MRLLLSIAGLTTVVNA). Residues Asn-24, Asn-115, Asn-156, and Asn-193 are each glycosylated (N-linked (GlcNAc...) asparagine). The Lipoxygenase domain maps to 117-609 (SLKAIQDHGG…PGVIPFYLSV (493 aa)). Mn(2+) is bound by residues His-289 and His-294. Asn-385 carries an N-linked (GlcNAc...) asparagine glycan. Mn(2+) contacts are provided by His-474 and Asn-478. Asn-539 carries an N-linked (GlcNAc...) asparagine glycan. Val-609 contacts Mn(2+).

The protein belongs to the lipoxygenase family. Manganese lipoxygenase subfamily. Requires Mn(2+) as cofactor. Post-translationally, N- and O-glycosylated.

It is found in the secreted. It catalyses the reaction (9Z,12Z)-octadecadienoate + O2 = (9S)-hydroperoxy-(10E,12Z)-octadecadienoate. The catalysed reaction is (9Z,12Z)-octadecadienoate + O2 = (11S)-hydroperoxy-(9Z,12Z)-octadecadienoate. It carries out the reaction (9Z,12Z)-octadecadienoate + O2 = (13R)-hydroperoxy-(9Z,11E)-octadecadienoate. The enzyme catalyses (9Z,12Z,15Z)-octadecatrienoate + O2 = (11R)-hydroperoxy-(9Z,12Z,15Z)-octadecatrienoate. Lipoxygenase that metabolizes linoleic and alpha-linolenic acids to 9-, 11- and 13-hydroperoxy fatty acids. Oxidizes linoleic acid to mainly 9S- and 13R-HPODE and alpha-linolenic acid to 11R-HPOTrE. The protein is Manganese lipoxygenase of Colletotrichum gloeosporioides (strain Cg-14) (Anthracnose fungus).